The following is a 551-amino-acid chain: CTP synthase (551 aa).

The segment at 1-267 (MPKYVFVTGG…GRYVMEHLGW (267 aa)) is amidoligase domain. Residue serine 13 participates in CTP binding. Residue serine 13 coordinates UTP. 14 to 19 (SVGKGI) contacts ATP. Tyrosine 54 contacts L-glutamine. Aspartate 71 contacts ATP. 2 residues coordinate Mg(2+): aspartate 71 and glutamate 141. CTP-binding positions include 148–150 (DIE), 188–193 (KTKPTQ), and lysine 224. Residues 188-193 (KTKPTQ) and lysine 224 contribute to the UTP site. Residues 292–532 (RIALVGKYVE…IGVAKHVLRE (241 aa)) enclose the Glutamine amidotransferase type-1 domain. L-glutamine is bound at residue glycine 353. Cysteine 380 (nucleophile; for glutamine hydrolysis) is an active-site residue. L-glutamine-binding positions include 381 to 384 (YGLH), glutamate 404, and arginine 460. Active-site residues include histidine 505 and glutamate 507.

Belongs to the CTP synthase family. In terms of assembly, homotetramer.

It carries out the reaction UTP + L-glutamine + ATP + H2O = CTP + L-glutamate + ADP + phosphate + 2 H(+). The catalysed reaction is L-glutamine + H2O = L-glutamate + NH4(+). The enzyme catalyses UTP + NH4(+) + ATP = CTP + ADP + phosphate + 2 H(+). The protein operates within pyrimidine metabolism; CTP biosynthesis via de novo pathway; CTP from UDP: step 2/2. Its activity is regulated as follows. Allosterically activated by GTP, when glutamine is the substrate; GTP has no effect on the reaction when ammonia is the substrate. The allosteric effector GTP functions by stabilizing the protein conformation that binds the tetrahedral intermediate(s) formed during glutamine hydrolysis. Inhibited by the product CTP, via allosteric rather than competitive inhibition. Functionally, catalyzes the ATP-dependent amination of UTP to CTP with either L-glutamine or ammonia as the source of nitrogen. Regulates intracellular CTP levels through interactions with the four ribonucleotide triphosphates. The protein is CTP synthase of Thermomicrobium roseum (strain ATCC 27502 / DSM 5159 / P-2).